Here is a 263-residue protein sequence, read N- to C-terminus: MFRNQYDNDVTVWSPQGRIHQIEYAMEAVKQGSATVGLKSKTHAVLVALKRAQSELAAHQKKILHVDNHIGISIAGLTADARLLCNFMRQECLDSRFVFDRPLPVSRLVSLIGSKTQIPTQRYGRRPYGVGLLIAGYDDMGPHIFQTCPSANYFDCRAMSIGARSQSARTYLERHMSEFMECNLDELVKHGLRALRETLPAEQDLTTKNVSIGIVGKDLEFTIYDDDDVSPFLDGLEERPQRKAQPSQAAEEPAEKADEPMEH.

Met-1 bears the N-acetylmethionine mark. Ser-110 is modified (phosphoserine; alternate). O-linked (GlcNAc) serine; alternate glycosylation occurs at Ser-110. A Glycyl lysine isopeptide (Lys-Gly) (interchain with G-Cter in ubiquitin) cross-link involves residue Lys-115. Residue Ser-177 is modified to Phosphoserine. Lys-208 participates in a covalent cross-link: Glycyl lysine isopeptide (Lys-Gly) (interchain with G-Cter in ubiquitin). Residues 232 to 263 are disordered; sequence FLDGLEERPQRKAQPSQAAEEPAEKADEPMEH. Over residues 253–263 the composition is skewed to basic and acidic residues; that stretch reads PAEKADEPMEH.

It belongs to the peptidase T1A family. As to quaternary structure, the 26S proteasome consists of a 20S proteasome core and two 19S regulatory subunits. The 20S proteasome core is a barrel-shaped complex made of 28 subunits that are arranged in four stacked rings. The two outer rings are each formed by seven alpha subunits, and the two inner rings are formed by seven beta subunits. The proteolytic activity is exerted by three beta-subunits PSMB5, PSMB6 and PSMB7. Interacts with NOTCH3. Interacts with ZFAND1. Post-translationally, C-terminal extension is partially cleaved off by limited proteolysis leading to a conversion of the proteasome from its latent into its active form. In terms of tissue distribution, detected in liver (at protein level).

The protein resides in the cytoplasm. The protein localises to the nucleus. Its function is as follows. Component of the 20S core proteasome complex involved in the proteolytic degradation of most intracellular proteins. This complex plays numerous essential roles within the cell by associating with different regulatory particles. Associated with two 19S regulatory particles, forms the 26S proteasome and thus participates in the ATP-dependent degradation of ubiquitinated proteins. The 26S proteasome plays a key role in the maintenance of protein homeostasis by removing misfolded or damaged proteins that could impair cellular functions, and by removing proteins whose functions are no longer required. Associated with the PA200 or PA28, the 20S proteasome mediates ubiquitin-independent protein degradation. This type of proteolysis is required in several pathways including spermatogenesis (20S-PA200 complex) or generation of a subset of MHC class I-presented antigenic peptides (20S-PA28 complex). The chain is Proteasome subunit alpha type-1 (Psma1) from Mus musculus (Mouse).